Consider the following 49-residue polypeptide: Peridinin-chlorophyll a-binding protein (49 aa).

As to quaternary structure, monomer. Binds 12 peridinin and 2 chlorophyll a molecules per monomer.

The protein resides in the plastid. The protein localises to the chloroplast. Functionally, water-soluble antenna for capture of solar energy in the blue-green range. Peridinin is an asymmetric carotenoid. The sequence is that of Peridinin-chlorophyll a-binding protein from Alexandrium cohorticula (Dinoflagellate).